Consider the following 226-residue polypeptide: UPF0173 metal-dependent hydrolase GFO_2312 (226 aa).

Belongs to the UPF0173 family.

The protein is UPF0173 metal-dependent hydrolase GFO_2312 of Christiangramia forsetii (strain DSM 17595 / CGMCC 1.15422 / KT0803) (Gramella forsetii).